Consider the following 72-residue polypeptide: DNA-directed RNA polymerase subunit omega (72 aa).

The protein belongs to the RNA polymerase subunit omega family. The RNAP catalytic core consists of 2 alpha, 1 beta, 1 beta' and 1 omega subunit. When a sigma factor is associated with the core the holoenzyme is formed, which can initiate transcription.

The enzyme catalyses RNA(n) + a ribonucleoside 5'-triphosphate = RNA(n+1) + diphosphate. Functionally, promotes RNA polymerase assembly. Latches the N- and C-terminal regions of the beta' subunit thereby facilitating its interaction with the beta and alpha subunits. In Clostridium kluyveri (strain NBRC 12016), this protein is DNA-directed RNA polymerase subunit omega.